Consider the following 505-residue polypeptide: Probable cytosol aminopeptidase (505 aa).

The Mn(2+) site is built by K269 and D274. The active site involves K281. Positions 292, 351, and 353 each coordinate Mn(2+). R355 is a catalytic residue.

This sequence belongs to the peptidase M17 family. Requires Mn(2+) as cofactor.

Its subcellular location is the cytoplasm. It catalyses the reaction Release of an N-terminal amino acid, Xaa-|-Yaa-, in which Xaa is preferably Leu, but may be other amino acids including Pro although not Arg or Lys, and Yaa may be Pro. Amino acid amides and methyl esters are also readily hydrolyzed, but rates on arylamides are exceedingly low.. It carries out the reaction Release of an N-terminal amino acid, preferentially leucine, but not glutamic or aspartic acids.. In terms of biological role, presumably involved in the processing and regular turnover of intracellular proteins. Catalyzes the removal of unsubstituted N-terminal amino acids from various peptides. The sequence is that of Probable cytosol aminopeptidase from Rhodococcus opacus (strain B4).